The chain runs to 354 residues: Trans-L-3-hydroxyproline dehydratase (354 aa).

Cys104 (proton acceptor) is an active-site residue. Residues 105 to 106 (GH), Asp269, and 274 to 275 (GS) contribute to the substrate site.

Belongs to the proline racemase family. In terms of assembly, homodimer.

It catalyses the reaction trans-3-hydroxy-L-proline = 1-pyrroline-2-carboxylate + H2O. In terms of biological role, catalyzes the dehydration of trans-3-hydroxy-L-proline to Delta(1)-pyrroline-2-carboxylate (Pyr2C). This is Trans-L-3-hydroxyproline dehydratase (L3HYPDH) from Bos taurus (Bovine).